The chain runs to 341 residues: Eukaryotic translation initiation factor 2 subunit 1 (341 aa).

In terms of domain architecture, S1 motif spans 16-87; it reads EDVVMVNVLS…EKGYIDLSKR (72 aa). Ser-51 carries the phosphoserine modification. Residues 293–341 form a disordered region; the sequence is AENAQVAGDDDEEDGADQEGMQFDPEKEFNHKGSGAGRANEEDEEEEED. The span at 300-309 shows a compositional bias: acidic residues; it reads GDDDEEDGAD.

It belongs to the eIF-2-alpha family. Eukaryotic translation initiation factor 2 eIF2 is a heterotrimeric complex composed of an alpha, a beta and a gamma subunit. Post-translationally, phosphorylation of eIF-2-alpha impairs the recycling of eIF-2 between successive rounds of initiation and thus leads to inhibition of translation.

Its subcellular location is the cytoplasm. It is found in the cytosol. In terms of biological role, eIF-2 functions in the early steps of protein synthesis by forming a ternary complex with GTP and initiator tRNA. This pre-initiation complex mediates ribosomal recognition of a start codon during the scanning process of the leader region. In Drosophila melanogaster (Fruit fly), this protein is Eukaryotic translation initiation factor 2 subunit 1.